Reading from the N-terminus, the 287-residue chain is mRNA-capping enzyme small subunit (287 aa).

As to quaternary structure, heterodimer of a large and a small subunit.

Its subcellular location is the virion. It catalyses the reaction a 5'-end (5'-triphosphoguanosine)-ribonucleoside in mRNA + S-adenosyl-L-methionine = a 5'-end (N(7)-methyl 5'-triphosphoguanosine)-ribonucleoside in mRNA + S-adenosyl-L-homocysteine. Functionally, catalyzes the last reaction in the mRNA cap formation pathway. The sequence is that of mRNA-capping enzyme small subunit from Sus scrofa (Pig).